Reading from the N-terminus, the 101-residue chain is MAKKSKIAKNEQRKAIVARYAERRAELKAIIRNPNTSDEDRLDAQFELNRQPRDAAQVRVRNRDAHDGRPRGYLRKFGLSRVRMREMAHRGELPGVRKSSW.

It belongs to the universal ribosomal protein uS14 family. Part of the 30S ribosomal subunit. Contacts proteins S3 and S10.

Functionally, binds 16S rRNA, required for the assembly of 30S particles and may also be responsible for determining the conformation of the 16S rRNA at the A site. In Corynebacterium efficiens (strain DSM 44549 / YS-314 / AJ 12310 / JCM 11189 / NBRC 100395), this protein is Small ribosomal subunit protein uS14.